We begin with the raw amino-acid sequence, 448 residues long: MQITETSADGLRREFKVTVPADEIETRVANRLSEIGKTIKIPGFRPGKVPMALLKQRYGQSVMGEVLEQAVNDGSAKAVEEHKLRPALQPKVEVTKFEAGSDLEFSMAVELLPDFEPADMAAIAVEKPVVEVADAMVDDGLKRIAANRKTSAPLEAERPAQSGDIVVIDFDGSVDGEKRPGMKGEDHELELGSGSFIPGFEDQLVGAAKGEHRTVTVTFPENYHAAELSGKEAVFEVDVKDIRVPKAAEIDEDFAKSFGFDDLAGMRDAIRERMQADYASMSRMRAKRQLLDRLAETHDFPVPTGMVDIEFDQIWRRLQQELKDGEADPEDKEKDEEGLKAEYRAIAERRVRLGLLLSEVGRRNNITVTRDELGQAVVAEAQRYPGQERQVFDFFRNNPQAVEGLRAPIFEDKVVDFILGQVKLTERTVSVEDLMRDPEEDEGPTAAA.

The PPIase FKBP-type domain occupies 163–248; the sequence is GDIVVIDFDG…VKDIRVPKAA (86 aa).

The protein belongs to the FKBP-type PPIase family. Tig subfamily.

The protein resides in the cytoplasm. It carries out the reaction [protein]-peptidylproline (omega=180) = [protein]-peptidylproline (omega=0). Its function is as follows. Involved in protein export. Acts as a chaperone by maintaining the newly synthesized protein in an open conformation. Functions as a peptidyl-prolyl cis-trans isomerase. The polypeptide is Trigger factor (Rhodospirillum centenum (strain ATCC 51521 / SW)).